The sequence spans 183 residues: Adenine phosphoribosyltransferase (183 aa).

This sequence belongs to the purine/pyrimidine phosphoribosyltransferase family. In terms of assembly, homodimer.

The protein localises to the cytoplasm. The catalysed reaction is AMP + diphosphate = 5-phospho-alpha-D-ribose 1-diphosphate + adenine. It participates in purine metabolism; AMP biosynthesis via salvage pathway; AMP from adenine: step 1/1. Catalyzes a salvage reaction resulting in the formation of AMP, that is energically less costly than de novo synthesis. The polypeptide is Adenine phosphoribosyltransferase (Cronobacter sakazakii (strain ATCC BAA-894) (Enterobacter sakazakii)).